Here is a 1056-residue protein sequence, read N- to C-terminus: Multidrug resistance protein MdtB (1056 aa).

The next 12 membrane-spanning stretches (helical) occupy residues 16-36, 342-362, 373-393, 396-416, 440-460, 472-492, 537-557, 869-889, 890-910, 911-931, 968-988, and 1002-1022; these read FILRPVATTLFMIAILLAGII, DVQFELLLAIALVVMVIYVFL, IAVPLSLVGTFAVMYFCGFSV, LTLMALTIAAGFVVDDAIVVI, IGFTIISLTFSLIAVLIPLLF, FAITLAVAILISAVVSLTLTP, WITLGVAFSTLAFTALLYLTI, LILAAVISMYIVLGILYESFI, HPVTILSTLPTAGVGALLALM, VGGYELDIIAIIGIILLIGIV, ILMTTMAALLGALPLMLSTGI, and GGLIMSQILTLFTTPVIYLLF. Residues 1037-1056 are disordered; that stretch reads LQSQNQRELDHSPVNHQEPL. A compositionally biased stretch (basic and acidic residues) spans 1043–1056; sequence RELDHSPVNHQEPL.

It belongs to the resistance-nodulation-cell division (RND) (TC 2.A.6) family. MdtB subfamily. In terms of assembly, part of a tripartite efflux system composed of MdtA, MdtB and MdtC. MdtB forms a heteromultimer with MdtC.

It localises to the cell inner membrane. This Xenorhabdus bovienii (strain SS-2004) (Xenorhabdus nematophila subsp. bovienii) protein is Multidrug resistance protein MdtB.